A 458-amino-acid chain; its full sequence is Mitochondrial-processing peptidase subunit beta (458 aa).

A mitochondrion-targeting transit peptide spans 1 to 41; it reads MYRRLASGLYQTSQRRIAQVQPKSVFVPETIVTTLPNGFRV. Histidine 73 is a binding site for Zn(2+). Catalysis depends on glutamate 76, which acts as the Proton acceptor. Zn(2+) contacts are provided by histidine 77 and glutamate 153.

This sequence belongs to the peptidase M16 family. In terms of assembly, heterodimer of mppa-1 (alpha) and mppb-1 (beta) subunits, forming the mitochondrial processing protease (MPP) in which mppa-1 is involved in substrate recognition and binding and mppb-1 is the catalytic subunit. The cofactor is Zn(2+).

It is found in the mitochondrion matrix. The enzyme catalyses Release of N-terminal transit peptides from precursor proteins imported into the mitochondrion, typically with Arg in position P2.. Its activity is regulated as follows. Binding to mppa-1 is required for catalytic activity. Inhibited by metal chelator ethylenediaminetetraacetic acid (EDTA). Catalytic subunit of the essential mitochondrial processing protease (MPP), which cleaves the mitochondrial sequence off newly imported precursors proteins. Preferentially, cleaves after an arginine at position P2. The chain is Mitochondrial-processing peptidase subunit beta from Caenorhabditis elegans.